The chain runs to 704 residues: Elongation factor G (704 aa).

The tr-type G domain maps to 10 to 290 (NKVRNIGIMA…AVIDYLPSPL (281 aa)). GTP contacts are provided by residues 19 to 26 (AHIDAGKT), 83 to 87 (DTPGH), and 137 to 140 (NKMD).

This sequence belongs to the TRAFAC class translation factor GTPase superfamily. Classic translation factor GTPase family. EF-G/EF-2 subfamily.

Its subcellular location is the cytoplasm. Functionally, catalyzes the GTP-dependent ribosomal translocation step during translation elongation. During this step, the ribosome changes from the pre-translocational (PRE) to the post-translocational (POST) state as the newly formed A-site-bound peptidyl-tRNA and P-site-bound deacylated tRNA move to the P and E sites, respectively. Catalyzes the coordinated movement of the two tRNA molecules, the mRNA and conformational changes in the ribosome. The sequence is that of Elongation factor G from Clavibacter sepedonicus (Clavibacter michiganensis subsp. sepedonicus).